The primary structure comprises 368 residues: Histidinol-phosphate aminotransferase (368 aa).

The residue at position 226 (K226) is an N6-(pyridoxal phosphate)lysine.

It belongs to the class-II pyridoxal-phosphate-dependent aminotransferase family. Histidinol-phosphate aminotransferase subfamily. Homodimer. Pyridoxal 5'-phosphate serves as cofactor.

The catalysed reaction is L-histidinol phosphate + 2-oxoglutarate = 3-(imidazol-4-yl)-2-oxopropyl phosphate + L-glutamate. The protein operates within amino-acid biosynthesis; L-histidine biosynthesis; L-histidine from 5-phospho-alpha-D-ribose 1-diphosphate: step 7/9. This chain is Histidinol-phosphate aminotransferase, found in Colwellia psychrerythraea (strain 34H / ATCC BAA-681) (Vibrio psychroerythus).